Consider the following 766-residue polypeptide: Phosphoribosylformylglycinamidine synthase subunit PurL (766 aa).

His-49 is an active-site residue. Positions 52 and 91 each coordinate ATP. Position 93 (Glu-93) interacts with Mg(2+). Substrate contacts are provided by residues 94–97 (SHNH) and Arg-116. The active-site Proton acceptor is His-95. Residue Asp-117 participates in Mg(2+) binding. Gln-240 serves as a coordination point for substrate. Asp-268 serves as a coordination point for Mg(2+). 312–314 (ESQ) is a substrate binding site. 2 residues coordinate ATP: Asp-508 and Gly-545. Position 546 (Asn-546) interacts with Mg(2+). Ser-548 contacts substrate.

Belongs to the FGAMS family. In terms of assembly, monomer. Part of the FGAM synthase complex composed of 1 PurL, 1 PurQ and 2 PurS subunits.

The protein resides in the cytoplasm. It catalyses the reaction N(2)-formyl-N(1)-(5-phospho-beta-D-ribosyl)glycinamide + L-glutamine + ATP + H2O = 2-formamido-N(1)-(5-O-phospho-beta-D-ribosyl)acetamidine + L-glutamate + ADP + phosphate + H(+). The protein operates within purine metabolism; IMP biosynthesis via de novo pathway; 5-amino-1-(5-phospho-D-ribosyl)imidazole from N(2)-formyl-N(1)-(5-phospho-D-ribosyl)glycinamide: step 1/2. Part of the phosphoribosylformylglycinamidine synthase complex involved in the purines biosynthetic pathway. Catalyzes the ATP-dependent conversion of formylglycinamide ribonucleotide (FGAR) and glutamine to yield formylglycinamidine ribonucleotide (FGAM) and glutamate. The FGAM synthase complex is composed of three subunits. PurQ produces an ammonia molecule by converting glutamine to glutamate. PurL transfers the ammonia molecule to FGAR to form FGAM in an ATP-dependent manner. PurS interacts with PurQ and PurL and is thought to assist in the transfer of the ammonia molecule from PurQ to PurL. The sequence is that of Phosphoribosylformylglycinamidine synthase subunit PurL from Synechococcus sp. (strain CC9902).